The following is a 681-amino-acid chain: Phosphomethylpyrimidine synthase (681 aa).

Residues Met-1–Ser-13 show a composition bias toward polar residues. The tract at residues Met-1–Glu-29 is disordered. The span at His-15 to Lys-25 shows a compositional bias: basic residues. Residues Asn-254, Met-283, Tyr-312, His-348, Ser-368 to Gly-370, Asp-409 to Arg-412, and Glu-448 each bind substrate. A Zn(2+)-binding site is contributed by His-452. Tyr-475 lines the substrate pocket. His-516 is a Zn(2+) binding site. The [4Fe-4S] cluster site is built by Cys-596, Cys-599, and Cys-604. A compositionally biased stretch (basic and acidic residues) spans Phe-658–His-667. A disordered region spans residues Phe-658–Thr-681.

Belongs to the ThiC family. Homodimer. [4Fe-4S] cluster serves as cofactor.

The enzyme catalyses 5-amino-1-(5-phospho-beta-D-ribosyl)imidazole + S-adenosyl-L-methionine = 4-amino-2-methyl-5-(phosphooxymethyl)pyrimidine + CO + 5'-deoxyadenosine + formate + L-methionine + 3 H(+). It functions in the pathway cofactor biosynthesis; thiamine diphosphate biosynthesis. Its function is as follows. Catalyzes the synthesis of the hydroxymethylpyrimidine phosphate (HMP-P) moiety of thiamine from aminoimidazole ribotide (AIR) in a radical S-adenosyl-L-methionine (SAM)-dependent reaction. In Yersinia pseudotuberculosis serotype I (strain IP32953), this protein is Phosphomethylpyrimidine synthase.